The primary structure comprises 331 residues: Ferrochelatase (331 aa).

2 residues coordinate Fe cation: His187 and Glu286.

It belongs to the ferrochelatase family.

It localises to the cytoplasm. It catalyses the reaction heme b + 2 H(+) = protoporphyrin IX + Fe(2+). Its pathway is porphyrin-containing compound metabolism; protoheme biosynthesis; protoheme from protoporphyrin-IX: step 1/1. In terms of biological role, catalyzes the ferrous insertion into protoporphyrin IX. The polypeptide is Ferrochelatase (Legionella pneumophila (strain Corby)).